A 367-amino-acid polypeptide reads, in one-letter code: Cobalt-precorrin-5B C(1)-methyltransferase (367 aa).

It belongs to the CbiD family.

The enzyme catalyses Co-precorrin-5B + S-adenosyl-L-methionine = Co-precorrin-6A + S-adenosyl-L-homocysteine. It participates in cofactor biosynthesis; adenosylcobalamin biosynthesis; cob(II)yrinate a,c-diamide from sirohydrochlorin (anaerobic route): step 6/10. Its function is as follows. Catalyzes the methylation of C-1 in cobalt-precorrin-5B to form cobalt-precorrin-6A. This Thermosynechococcus vestitus (strain NIES-2133 / IAM M-273 / BP-1) protein is Cobalt-precorrin-5B C(1)-methyltransferase.